The following is a 121-amino-acid chain: Large ribosomal subunit protein eL18 (121 aa).

The protein belongs to the eukaryotic ribosomal protein eL18 family.

The polypeptide is Large ribosomal subunit protein eL18 (Methanoregula boonei (strain DSM 21154 / JCM 14090 / 6A8)).